The primary structure comprises 296 residues: MQTFAEIAALREQIKQFKRDGRTVAFVPTMGNLHEGHLTLVKKARELADIVVVSIFVNPMQFDRADDLNNYPRTLEADLNKLTGEGVELVFTPTPEVMYPDGLDKQTFVEVPGISHMLEGASRPGHFRGVSTIVTKLFNIVQPDFACFGEKDFQQLAVIRQMTTDLALDIEVVGVATVREMDGLAMSSRNSNLTIDERQRAPVLARTMRWISSAIRGGRDDYASVIEDATDQLRAADLQPDEIFICDVKTLQAITSESTQAVILMSAFLGKTRLIDNQVLDLVSETKEEVKEETAE.

30–37 (MGNLHEGH) is a binding site for ATP. His37 acts as the Proton donor in catalysis. Position 61 (Gln61) interacts with (R)-pantoate. Position 61 (Gln61) interacts with beta-alanine. 149 to 152 (GEKD) provides a ligand contact to ATP. Gln155 is a (R)-pantoate binding site. ATP is bound by residues Val178 and 186-189 (MSSR).

It belongs to the pantothenate synthetase family. In terms of assembly, homodimer.

The protein localises to the cytoplasm. It carries out the reaction (R)-pantoate + beta-alanine + ATP = (R)-pantothenate + AMP + diphosphate + H(+). Its pathway is cofactor biosynthesis; (R)-pantothenate biosynthesis; (R)-pantothenate from (R)-pantoate and beta-alanine: step 1/1. Functionally, catalyzes the condensation of pantoate with beta-alanine in an ATP-dependent reaction via a pantoyl-adenylate intermediate. This Vibrio atlanticus (strain LGP32) (Vibrio splendidus (strain Mel32)) protein is Pantothenate synthetase.